The sequence spans 597 residues: tRNA uridine 5-carboxymethylaminomethyl modification enzyme MnmG (597 aa).

10 to 15 (GGGHAG) lines the FAD pocket. 267–281 (GPRYCPSIEDKVVRF) is a binding site for NAD(+).

Belongs to the MnmG family. In terms of assembly, homodimer. Heterotetramer of two MnmE and two MnmG subunits. Requires FAD as cofactor.

The protein resides in the cytoplasm. Functionally, NAD-binding protein involved in the addition of a carboxymethylaminomethyl (cmnm) group at the wobble position (U34) of certain tRNAs, forming tRNA-cmnm(5)s(2)U34. This is tRNA uridine 5-carboxymethylaminomethyl modification enzyme MnmG from Thermus thermophilus (strain ATCC 27634 / DSM 579 / HB8).